The sequence spans 121 residues: Fluoride-specific ion channel FluC 2 (121 aa).

A run of 4 helical transmembrane segments spans residues 3-23 (YLFVFIGGLFGALLRYVLSTL), 27-47 (SGLPLGTLIANIVGAFLMGYL), 64-84 (GVTTGLLGALTTFSTFQFELV), and 92-112 (IALLFIYGLTSYIGGILFCWF). Na(+)-binding residues include glycine 71 and threonine 74.

This sequence belongs to the fluoride channel Fluc/FEX (TC 1.A.43) family.

The protein resides in the cell membrane. The enzyme catalyses fluoride(in) = fluoride(out). Na(+) is not transported, but it plays an essential structural role and its presence is essential for fluoride channel function. Fluoride-specific ion channel. Important for reducing fluoride concentration in the cell, thus reducing its toxicity. This is Fluoride-specific ion channel FluC 2 from Staphylococcus haemolyticus (strain JCSC1435).